The chain runs to 522 residues: Amine oxidase [flavin-containing] (522 aa).

Residues 1 to 492 (MTAQNTFDVI…FWERNLPSVG (492 aa)) lie on the Cytoplasmic side of the membrane. Residue cysteine 399 is modified to S-8alpha-FAD cysteine. The chain crosses the membrane as a helical; Anchor for type IV membrane protein span at residues 493-513 (GFINFLAASVLSVATAAGMLA). Topologically, residues 514–522 (YQKGLLTRS) are mitochondrial intermembrane.

This sequence belongs to the flavin monoamine oxidase family. FAD is required as a cofactor.

The protein localises to the mitochondrion outer membrane. The enzyme catalyses a secondary aliphatic amine + O2 + H2O = a primary amine + an aldehyde + H2O2. In terms of biological role, catalyzes the oxidative deamination of biogenic and xenobiotic amines and has important functions in the metabolism of neuroactive and vasoactive amines in the central nervous system and peripheral tissues. Oxidizes both 5-hydroxytryptamine (5-HT) and beta-phenylethylamine (PEA). This Oncorhynchus mykiss (Rainbow trout) protein is Amine oxidase [flavin-containing] (mao).